A 465-amino-acid chain; its full sequence is Serine/threonine-protein kinase 38 (465 aa).

A2 is subject to N-acetylalanine. Positions K62 to E87 are interaction with S100B. T74 bears the Phosphothreonine mark. Residues F89–F382 form the Protein kinase domain. ATP-binding positions include I95–V103 and K118. D212 (proton acceptor) is an active-site residue. The residue at position 264 (S264) is a Phosphoserine. S281 carries the phosphoserine; by autocatalysis modification. Residues W306–I311 carry the UFM1-interacting motif (UFIM) motif. Residues E383 to G455 form the AGC-kinase C-terminal domain. The residue at position 444 (T444) is a Phosphothreonine; by STK24/MST3.

This sequence belongs to the protein kinase superfamily. AGC Ser/Thr protein kinase family. In terms of assembly, homodimeric S100B binds two molecules of STK38. Interacts with MOB1 and MOB2. Interacts with MAP3K1 and MAP3K2 (via the kinase domain). Forms a tripartite complex with MOBKL1B and STK3/MST2. Interacts with MICAL1; leading to inhibit the protein kinase activity by antagonizing activation by MST1/STK4. Requires Mg(2+) as cofactor. In terms of processing, ISGylated. Post-translationally, phosphorylated by STK3/MST2 and this is enhanced by MOBKL1B.

The protein resides in the nucleus. It is found in the cytoplasm. Its subcellular location is the chromosome. It carries out the reaction L-seryl-[protein] + ATP = O-phospho-L-seryl-[protein] + ADP + H(+). The enzyme catalyses L-threonyl-[protein] + ATP = O-phospho-L-threonyl-[protein] + ADP + H(+). With respect to regulation, activated by binding of S100B which releases autoinhibitory N-lobe interactions, enabling ATP to bind and the autophosphorylation of Ser-281. Thr-444 then undergoes calcium-dependent phosphorylation by STK24/MST3. Interactions between phosphorylated Thr-444 and the N-lobe promote additional structural changes that complete the activation of the kinase. Autoinhibition is also released by the binding of MOB1/MOBKL1A and MOB2/HCCA2 to the N-terminal of STK38. In terms of biological role, serine/threonine-protein kinase that acts as a negative regulator of MAP3K1/2 signaling. Converts MAP3K2 from its phosphorylated form to its non-phosphorylated form and inhibits autophosphorylation of MAP3K2. Acts as an ufmylation 'reader' in a kinase-independent manner: specifically recognizes and binds mono-ufmylated histone H4 in response to DNA damage, promoting the recruitment of SUV39H1 to the double-strand breaks, resulting in ATM activation. This Bos taurus (Bovine) protein is Serine/threonine-protein kinase 38 (STK38).